The primary structure comprises 79 residues: MELEAMTRYTSPVNPAVFPHLTVVLLAIGMFFKAWFFVYEVTSTKYTRDVYKELLIALVASLFMGFGVHFLLLWVGIFV.

The next 2 helical transmembrane spans lie at 17–37 and 59–79; these read VFPH…AWFF and VASL…GIFV.

It belongs to the OST5 family. Component of the oligosaccharyltransferase (OST) complex.

Its subcellular location is the membrane. It is found in the endoplasmic reticulum. The protein localises to the cytoplasm. It participates in protein modification; protein glycosylation. Its function is as follows. Subunit of the oligosaccharyl transferase (OST) complex that catalyzes the initial transfer of a defined glycan (Glc(3)Man(9)GlcNAc(2) in eukaryotes) from the lipid carrier dolichol-pyrophosphate to an asparagine residue within an Asn-X-Ser/Thr consensus motif in nascent polypeptide chains, the first step in protein N-glycosylation. N-glycosylation occurs cotranslationally and the complex associates with the Sec61 complex at the channel-forming translocon complex that mediates protein translocation across the endoplasmic reticulum (ER). All subunits are required for a maximal enzyme activity. This chain is Dolichyl-diphosphooligosaccharide--protein glycosyltransferase subunit TMEM258, found in Danio rerio (Zebrafish).